The sequence spans 177 residues: Dynein light chain Tctex-type 5-A (177 aa).

Belongs to the dynein light chain Tctex-type family.

The polypeptide is Dynein light chain Tctex-type 5-A (Dynlt5-a) (Xenopus laevis (African clawed frog)).